The sequence spans 686 residues: Pentatricopeptide repeat-containing protein At4g08210 (686 aa).

18 PPR repeats span residues 4-38 (DLKL…GISQ), 39-69 (NVFI…MSER), 70-104 (NIVT…EEEA), 106-140 (NEFM…NLRG), 141-171 (DVVL…ILRP), 172-206 (SSTS…NVVS), 207-236 (WNCL…GLVL), 237-271 (DGFA…GLES), 272-302 (SPFA…EKLA), 306-340 (SVAV…DLCF), 341-375 (DSYT…GYEL), 376-406 (DYIV…LPNK), 407-441 (DIIA…GLDA), 442-476 (DQFI…GYES), 477-507 (EPVT…MLER), 508-542 (DVVS…GIEP), 543-573 (NKVT…MKSE), and 579-609 (YLEH…MPLE). Residues 614 to 686 (IWTSLLTACG…AKESGMSWII (73 aa)) are type E motif; degenerate.

The protein belongs to the PPR family. PCMP-E subfamily.

The protein is Pentatricopeptide repeat-containing protein At4g08210 (PCMP-E100) of Arabidopsis thaliana (Mouse-ear cress).